Here is a 384-residue protein sequence, read N- to C-terminus: Neuropeptide Y receptor type 2 (384 aa).

The Extracellular portion of the chain corresponds to 1–54; sequence MKMGPLGAEADENQTVEEMKVDQFGPGHTTLPGELAPDSEPELIDSTKLIEVQV. A glycan (N-linked (GlcNAc...) asparagine) is linked at Asn-13. Residues 55 to 75 traverse the membrane as a helical segment; that stretch reads VLILAYCSIILLGVIGNSLVI. Topologically, residues 76 to 89 are cytoplasmic; the sequence is HVVIKFKSMRTVTN. The chain crosses the membrane as a helical span at residues 90–110; that stretch reads FFIANLAVADLLVNTLCLPFT. The Extracellular segment spans residues 111–127; that stretch reads LTYTLMGEWKMGPVLCH. Cys-126 and Cys-206 are joined by a disulfide. A helical transmembrane segment spans residues 128–148; sequence LVPYAQGLAVQVSTITLTVIA. The Cytoplasmic segment spans residues 149-168; sequence LDRHRCIVYHLESKISKQIS. A helical membrane pass occupies residues 169–189; sequence FLIIGLAWGVSALLASPLAIF. At 190-219 the chain is on the extracellular side; sequence REYSLIEIIPDFEIVACTEKWPGEEKGIYG. Residues 220–240 traverse the membrane as a helical segment; the sequence is TIYSLSSLLILYVLPLGIISF. Residues 241–271 are Cytoplasmic-facing; the sequence is SYTRIWSKLKNHVSPGAAHDHYHQRRQKTTK. The chain crosses the membrane as a helical span at residues 272–292; that stretch reads MLVCVVVVFAVSWLPLHAFQL. Residues 293-307 lie on the Extracellular side of the membrane; the sequence is AVDIDSHVLDLKEYK. The chain crosses the membrane as a helical span at residues 308–328; that stretch reads LIFTVFHIIAMCSTFANPLLY. Residues 329–384 lie on the Cytoplasmic side of the membrane; the sequence is GWMNSNYRKAFLSAFRCEQRLDAIHSEVSVTFKAKKHLQVTKNNGPNDSFTETTNV. Cys-345 carries the S-palmitoyl cysteine lipid modification.

This sequence belongs to the G-protein coupled receptor 1 family.

The protein resides in the cell membrane. In terms of biological role, receptor for neuropeptide Y and peptide YY. This Bos taurus (Bovine) protein is Neuropeptide Y receptor type 2 (NPY2R).